Here is a 382-residue protein sequence, read N- to C-terminus: Chaperone protein DnaJ (382 aa).

Residues 5–70 (DYYEVLGVSR…DKKAAYDRYG (66 aa)) enclose the J domain. The CR-type zinc finger occupies 141 to 219 (GVQKTINVPA…CHGAGRVEKE (79 aa)). Residues Cys-154, Cys-157, Cys-171, Cys-174, Cys-193, Cys-196, Cys-207, and Cys-210 each contribute to the Zn(2+) site. 4 CXXCXGXG motif repeats span residues 154 to 161 (CDACKGTG), 171 to 178 (CPTCSGMG), 193 to 200 (CPTCNGMG), and 207 to 214 (CKVCHGAG).

The protein belongs to the DnaJ family. Homodimer. The cofactor is Zn(2+).

Its subcellular location is the cytoplasm. Participates actively in the response to hyperosmotic and heat shock by preventing the aggregation of stress-denatured proteins and by disaggregating proteins, also in an autonomous, DnaK-independent fashion. Unfolded proteins bind initially to DnaJ; upon interaction with the DnaJ-bound protein, DnaK hydrolyzes its bound ATP, resulting in the formation of a stable complex. GrpE releases ADP from DnaK; ATP binding to DnaK triggers the release of the substrate protein, thus completing the reaction cycle. Several rounds of ATP-dependent interactions between DnaJ, DnaK and GrpE are required for fully efficient folding. Also involved, together with DnaK and GrpE, in the DNA replication of plasmids through activation of initiation proteins. This chain is Chaperone protein DnaJ, found in Cereibacter sphaeroides (strain ATCC 17023 / DSM 158 / JCM 6121 / CCUG 31486 / LMG 2827 / NBRC 12203 / NCIMB 8253 / ATH 2.4.1.) (Rhodobacter sphaeroides).